A 102-amino-acid polypeptide reads, in one-letter code: Small ribosomal subunit protein uS10 (102 aa).

Belongs to the universal ribosomal protein uS10 family. As to quaternary structure, part of the 30S ribosomal subunit.

In terms of biological role, involved in the binding of tRNA to the ribosomes. The polypeptide is Small ribosomal subunit protein uS10 (Staphylococcus aureus (strain JH9)).